A 625-amino-acid chain; its full sequence is ATP-binding cassette sub-family F member 2 (625 aa).

Residues 1–54 (MPSDLAKKKAAKKKEAAKARQRPRKGHEENGDAITEPQVAEERNEEANGRETTE) are disordered. Positions 40-54 (AEERNEEANGRETTE) are enriched in basic and acidic residues. ABC transporter domains follow at residues 88–327 (AHII…ENQM) and 398–615 (IMVQ…VGEE). 120–127 (GLNGIGKS) is a binding site for ATP. Phosphothreonine is present on threonine 220. Lysine 306 carries the post-translational modification N6-acetyllysine. 432–439 (GPNGAGKS) is an ATP binding site. Serine 514 bears the Phosphoserine mark.

The protein belongs to the ABC transporter superfamily. ABCF family. EF3 subfamily.

The protein is ATP-binding cassette sub-family F member 2 (ABCF2) of Bos taurus (Bovine).